The sequence spans 379 residues: Glutamate 5-kinase (379 aa).

Lys19 contacts ATP. Residues Ser59, Asp146, and Asn158 each contribute to the substrate site. Residues 178 to 179 (TD) and 220 to 226 (TGGMATK) each bind ATP. The 79-residue stretch at 285-363 (SGDIVIDQGA…KDIISILGYD (79 aa)) folds into the PUA domain.

Belongs to the glutamate 5-kinase family.

It is found in the cytoplasm. It carries out the reaction L-glutamate + ATP = L-glutamyl 5-phosphate + ADP. Its pathway is amino-acid biosynthesis; L-proline biosynthesis; L-glutamate 5-semialdehyde from L-glutamate: step 1/2. Catalyzes the transfer of a phosphate group to glutamate to form L-glutamate 5-phosphate. The sequence is that of Glutamate 5-kinase from Vibrio vulnificus (strain YJ016).